Consider the following 596-residue polypeptide: Polyphenol oxidase B, chloroplastic (596 aa).

Residues 1–23 (MASVVCNSSSSTTTTTLKTPFTS) are disordered. The transit peptide at 1–87 (MASVVCNSSS…ANAIPLAASA (87 aa)) directs the protein to the chloroplast. Residues 8-23 (SSSSTTTTTLKTPFTS) show a composition bias toward low complexity. 2 disulfides stabilise this stretch: C98-C114 and C113-C182. The Cu cation site is built by H181, H199, H208, H329, H333, and H371. The 2'-(S-cysteinyl)-histidine (Cys-His) cross-link spans 185 to 199 (CNGAYIIGGKELQVH).

Belongs to the tyrosinase family. Cu(2+) serves as cofactor.

The protein localises to the plastid. It is found in the chloroplast thylakoid lumen. It carries out the reaction 2 catechol + O2 = 2 1,2-benzoquinone + 2 H2O. Catalyzes the oxidation of mono- and o-diphenols to o-diquinones. The protein is Polyphenol oxidase B, chloroplastic of Solanum lycopersicum (Tomato).